The primary structure comprises 893 residues: Valine--tRNA ligase (893 aa).

Residues 57 to 67 carry the 'HIGH' region motif; sequence PNVTGTLHMGH. The 'KMSKS' region signature appears at 545-549; that stretch reads KMSKS. Lysine 548 contributes to the ATP binding site. Positions 821-855 form a coiled coil; it reads TSGSVDLEAERKRLEKDLAAAQKELATTEGKLGNE.

It belongs to the class-I aminoacyl-tRNA synthetase family. ValS type 1 subfamily. In terms of assembly, monomer.

Its subcellular location is the cytoplasm. It catalyses the reaction tRNA(Val) + L-valine + ATP = L-valyl-tRNA(Val) + AMP + diphosphate. Functionally, catalyzes the attachment of valine to tRNA(Val). As ValRS can inadvertently accommodate and process structurally similar amino acids such as threonine, to avoid such errors, it has a 'posttransfer' editing activity that hydrolyzes mischarged Thr-tRNA(Val) in a tRNA-dependent manner. The sequence is that of Valine--tRNA ligase from Nocardia farcinica (strain IFM 10152).